The chain runs to 188 residues: Elongation factor P-like protein (188 aa).

The protein belongs to the elongation factor P family.

The polypeptide is Elongation factor P-like protein (Xylella fastidiosa (strain M23)).